The following is a 510-amino-acid chain: MDENGLDLSLGLPCGGGAASEKSKSGSSSDSKVEEVDRDGKVINDFKNFLDGGTSSQKHDSGVGSQRSDSTKHEGNLLSSINVDVDASKKLNSGGFWVQNDSRPVEVEEDRRADVGDKRKNLFRESSQQKKQEREGHHADTHDKTRTSHISITTDEGSTAENEDVADSETVGSTSRQILQHDESSKRFVGSSGLAEVHKELRSVPASSGVELIGQRRFTISSEKDVKFGNIPYTIPFQGQSINIMNLPYSMPLNSNTVSTTSTTSYPVPGVMQLMATTCVDRPPSHPVIPAYLPLMFGYSSVQLPTLDNDNLHGVASHLLQLHPSHGRGPLGSDKQKDGPNISQAAASSIPHKSSDSVQYDGRAMEHVKGNGRQHKAEETSNSRGEENVKGSNISFRAKDPPDQPRAEAVPSEFSTIRPGLAADLKFGGSGSYPNLPWVSTTGPGPNGRTISGVTYRYSSTQIRIVCACHGSHMSPDDFVRHASVEQTSQEPGTGVSSFPSSNPAASAQS.

Disordered regions lie at residues 1 to 179 (MDEN…RQIL), 323 to 414 (HPSH…PSEF), and 481 to 510 (RHASVEQTSQEPGTGVSSFPSSNPAASAQS). 2 stretches are compositionally biased toward basic and acidic residues: residues 31 to 44 (SKVEEVDRDGKVIN) and 103 to 146 (RPVE…DKTR). The span at 148–160 (SHISITTDEGSTA) shows a compositional bias: polar residues. Composition is skewed to basic and acidic residues over residues 363–389 (RAMEHVKGNGRQHKAEETSNSRGEENV) and 397–406 (RAKDPPDQPR). Polar residues predominate over residues 485 to 496 (VEQTSQEPGTGV). The span at 497–510 (SSFPSSNPAASAQS) shows a compositional bias: low complexity.

The protein belongs to the Ninja family.

Its subcellular location is the nucleus. The protein is Ninja-family protein mc410 (MC410) of Nicotiana tabacum (Common tobacco).